A 491-amino-acid chain; its full sequence is Probable diguanylate cyclase CdgI (491 aa).

Residues 1–54 (MIQSTRISMGLFFKYFLSLTKIDPGQNYISLPSIKSSTHIALLFMVSMGTQKLK) are Cytoplasmic-facing. A helical transmembrane segment spans residues 55 to 75 (AQSFFIFSLLLTLILFCITTL). Residues 76-89 (YNENTNVKLIPQMN) are Periplasmic-facing. A helical transmembrane segment spans residues 90-110 (YLMVVVALFFLNAVIFLFMLM). Residues 111 to 121 (KYFTNKQILPT) are Cytoplasmic-facing. Residues 122–142 (LILSLAFLSGLIYLVETIVII) form a helical membrane-spanning segment. The Periplasmic segment spans residues 143 to 158 (HKPINGSTLIQTKSND). Residues 159-179 (VSIFYIFRQLSFICLTSLALF) form a helical membrane-spanning segment. The Cytoplasmic portion of the chain corresponds to 180–193 (CYGKDNILDNNKKK). A helical transmembrane segment spans residues 194–214 (TGILLLALIPFLVFPLLAHNL). Over 215–236 (SSYNADYSLYVVDYCPDNHTAT) the chain is Periplasmic. A helical transmembrane segment spans residues 237–257 (WGINYTKILVCLWAFLLFFII). The Cytoplasmic segment spans residues 258-265 (MRTRLASE). Residues 266-286 (LWPLIALLCLASLCCNLLLLT) traverse the membrane as a helical segment. Residues 287 to 293 (LDEYNYT) lie on the Periplasmic side of the membrane. A helical membrane pass occupies residues 294–314 (IWYISRGIEVSSKLFVVSFLI). The Cytoplasmic segment spans residues 315 to 491 (YNIFQELQLS…GGNKVIIHHI (177 aa)). Residues 356 to 491 (KDFCVMLVDI…GGNKVIIHHI (136 aa)) form the GGDEF domain. Mg(2+) is bound by residues Asp-364 and Ile-365. Positions 372, 377, and 381 each coordinate substrate. Glu-407 serves as a coordination point for Mg(2+). The active-site Proton acceptor is the Glu-407. Arg-427 contacts substrate.

In terms of assembly, homodimer. The cofactor is Mg(2+).

Its subcellular location is the cell inner membrane. It carries out the reaction 2 GTP = 3',3'-c-di-GMP + 2 diphosphate. Its pathway is purine metabolism; 3',5'-cyclic di-GMP biosynthesis. In terms of biological role, catalyzes the synthesis of cyclic-di-GMP (c-di-GMP) via the condensation of 2 GTP molecules. The sequence is that of Probable diguanylate cyclase CdgI from Escherichia coli (strain K12).